A 286-amino-acid chain; its full sequence is ATP synthase gamma chain (286 aa).

The protein belongs to the ATPase gamma chain family. F-type ATPases have 2 components, CF(1) - the catalytic core - and CF(0) - the membrane proton channel. CF(1) has five subunits: alpha(3), beta(3), gamma(1), delta(1), epsilon(1). CF(0) has three main subunits: a, b and c.

Its subcellular location is the cell inner membrane. Its function is as follows. Produces ATP from ADP in the presence of a proton gradient across the membrane. The gamma chain is believed to be important in regulating ATPase activity and the flow of protons through the CF(0) complex. The polypeptide is ATP synthase gamma chain (Shewanella sp. (strain MR-4)).